A 109-amino-acid chain; its full sequence is Large ribosomal subunit protein uL24 (109 aa).

Belongs to the universal ribosomal protein uL24 family. In terms of assembly, part of the 50S ribosomal subunit.

Functionally, one of two assembly initiator proteins, it binds directly to the 5'-end of the 23S rRNA, where it nucleates assembly of the 50S subunit. One of the proteins that surrounds the polypeptide exit tunnel on the outside of the subunit. The chain is Large ribosomal subunit protein uL24 from Ehrlichia chaffeensis (strain ATCC CRL-10679 / Arkansas).